The chain runs to 470 residues: MIKIYNTLTREKEVFTPIEARKVRMYVCGPTVYNYIHIGNARSAIAFDTIRRYFEYRGYEVNYVSNFTDVDDKIIKAAKELKITAPEVAERFIKAFEEDTQALNVQPATLHPRVMDHMPDILAFIEVLIEKGFAYEVAGDVYYRTRKFPNYGKLSHQSIDELEVGASQRTGVEQQLKEDPLDFALWKSAKEDEISWDSPWGKGRPGWHIECSVMATKHLEETIDIHGGGQDLEFPHHENEIAQSEAKTGHTFANYWMHNGYVTIGEDDEKMSKSLGNFITVHEMIQKVDPQILRFFMSTTQYRRPIRYSESTLKEAAANYQKLKNAFENLRFRQADAVASLPEDEHYLAQLNELEQRFITEMDDDFNAANGITVVYELAKMMNQYSEQATVSEPVLVAMDKLFSGWLAIFGLFFKNEELVDAQVDALIEERNQARKDRDFARSDEIRDLLKEQGIVLEDTPQGTRWRRSE.

Cys-28 serves as a coordination point for Zn(2+). A 'HIGH' region motif is present at residues 30–40; sequence PTVYNYIHIGN. 3 residues coordinate Zn(2+): Cys-211, His-236, and Glu-240. The short motif at 270-274 is the 'KMSKS' region element; that stretch reads KMSKS. ATP is bound at residue Lys-273.

This sequence belongs to the class-I aminoacyl-tRNA synthetase family. As to quaternary structure, monomer. Zn(2+) is required as a cofactor.

The protein localises to the cytoplasm. It carries out the reaction tRNA(Cys) + L-cysteine + ATP = L-cysteinyl-tRNA(Cys) + AMP + diphosphate. In Enterococcus faecalis (strain ATCC 700802 / V583), this protein is Cysteine--tRNA ligase.